Reading from the N-terminus, the 555-residue chain is Hydrogenase-4 component G (555 aa).

It belongs to the complex I 49 kDa subunit family. [4Fe-4S] cluster serves as cofactor.

Possible component of hydrogenase 4. The chain is Hydrogenase-4 component G from Escherichia coli (strain K12).